A 304-amino-acid polypeptide reads, in one-letter code: NAD kinase (304 aa).

D77 acts as the Proton acceptor in catalysis. Residues 77–78 (DG), R82, 151–152 (NE), R162, D181, and 192–197 (TAYSFS) each bind NAD(+).

It belongs to the NAD kinase family. A divalent metal cation is required as a cofactor.

Its subcellular location is the cytoplasm. The catalysed reaction is NAD(+) + ATP = ADP + NADP(+) + H(+). Functionally, involved in the regulation of the intracellular balance of NAD and NADP, and is a key enzyme in the biosynthesis of NADP. Catalyzes specifically the phosphorylation on 2'-hydroxyl of the adenosine moiety of NAD to yield NADP. The sequence is that of NAD kinase from Leifsonia xyli subsp. xyli (strain CTCB07).